The following is a 571-amino-acid chain: uncharacterized protein (571 aa).

Helical transmembrane passes span 5–27 (VILN…GYLV), 34–56 (TFVL…LNIT), 61–79 (IGSL…QGGA), 92–114 (LLAS…AWIF), 161–183 (TVGY…ATIF), 391–408 (FIFF…GLIS), 412–434 (FGIS…FGWI), 455–474 (LGLA…QAIT), 484–506 (FFLG…YYLL), 513–532 (VLLA…AALL), and 547–569 (SYAL…VTII).

The protein belongs to the AAE transporter (TC 2.A.81) family.

The protein localises to the cell membrane. This is an uncharacterized protein from Francisella tularensis subsp. tularensis (strain SCHU S4 / Schu 4).